Reading from the N-terminus, the 101-residue chain is Small ribosomal subunit protein uS14 (101 aa).

Over residues 1–10 (MAKKSSIEKN) the composition is skewed to basic and acidic residues. Positions 1 to 23 (MAKKSSIEKNNRRRRMNRNAAAK) are disordered. A compositionally biased stretch (basic residues) spans 11 to 23 (NRRRRMNRNAAAK).

It belongs to the universal ribosomal protein uS14 family. Part of the 30S ribosomal subunit. Contacts proteins S3 and S10.

In terms of biological role, binds 16S rRNA, required for the assembly of 30S particles and may also be responsible for determining the conformation of the 16S rRNA at the A site. This is Small ribosomal subunit protein uS14 from Nitrobacter winogradskyi (strain ATCC 25391 / DSM 10237 / CIP 104748 / NCIMB 11846 / Nb-255).